The primary structure comprises 362 residues: 3-ketodihydrosphingosine reductase gsl-3 (362 aa).

An NADP(+)-binding site is contributed by L55. NADPH-binding residues include G58, S60, G62, and R83. A GXSXG motif is present at residues 58–62 (GASEG). N84 serves as a coordination point for NADP(+). Residues R87 and D113 each contribute to the NADPH site. The NADP(+) site is built by D113, R176, Y216, K220, I252, and S254. Catalysis depends on Y216, which acts as the Proton acceptor. K220 serves as the catalytic Lowers pKa of active site Tyr. A helical transmembrane segment spans residues 318–338 (NNWVLDTLMGWLIPIIYFFVL).

The protein belongs to the short-chain dehydrogenases/reductases (SDR) family.

Its subcellular location is the endoplasmic reticulum membrane. The catalysed reaction is sphinganine + NADP(+) = 3-oxosphinganine + NADPH + H(+). Its pathway is lipid metabolism; sphingolipid metabolism. Functionally, catalyzes the reduction of 3'-oxosphinganine (3-ketodihydrosphingosine/KDS) to sphinganine (dihydrosphingosine/DHS), the second step of de novo sphingolipid biosynthesis. The chain is 3-ketodihydrosphingosine reductase gsl-3 (gsl-3) from Neurospora crassa (strain ATCC 24698 / 74-OR23-1A / CBS 708.71 / DSM 1257 / FGSC 987).